The following is a 143-amino-acid chain: Small ribosomal subunit protein bS18m (143 aa).

The protein belongs to the bacterial ribosomal protein bS18 family. As to quaternary structure, component of the mitochondrial ribosome small subunit (28S) which comprises a 12S rRNA and about 30 distinct proteins.

Its subcellular location is the mitochondrion. The polypeptide is Small ribosomal subunit protein bS18m (MRPS18C) (Bos taurus (Bovine)).